The sequence spans 411 residues: LL-diaminopimelate aminotransferase (411 aa).

Tyr15 and Gly42 together coordinate substrate. Residues Tyr72, 105-106 (SK), Tyr129, Asn186, Tyr217, and 245-247 (SFS) each bind pyridoxal 5'-phosphate. Substrate is bound by residues Lys106, Tyr129, and Asn186. Residue Lys248 is modified to N6-(pyridoxal phosphate)lysine. 2 residues coordinate pyridoxal 5'-phosphate: Arg256 and Asn287. Asn287 and Arg382 together coordinate substrate.

The protein belongs to the class-I pyridoxal-phosphate-dependent aminotransferase family. LL-diaminopimelate aminotransferase subfamily. As to quaternary structure, homodimer. The cofactor is pyridoxal 5'-phosphate.

It catalyses the reaction (2S,6S)-2,6-diaminopimelate + 2-oxoglutarate = (S)-2,3,4,5-tetrahydrodipicolinate + L-glutamate + H2O + H(+). Its pathway is amino-acid biosynthesis; L-lysine biosynthesis via DAP pathway; LL-2,6-diaminopimelate from (S)-tetrahydrodipicolinate (aminotransferase route): step 1/1. Its function is as follows. Involved in the synthesis of meso-diaminopimelate (m-DAP or DL-DAP), required for both lysine and peptidoglycan biosynthesis. Catalyzes the direct conversion of tetrahydrodipicolinate to LL-diaminopimelate. Is also able to use meso-diaminopimelate, lysine or ornithine as substrates. In Protochlamydia amoebophila (strain UWE25), this protein is LL-diaminopimelate aminotransferase.